The following is a 572-amino-acid chain: Phenylalanine--tRNA ligase beta subunit (572 aa).

One can recognise a B5 domain in the interval 285–363 (LSTTTKTVSH…RAFGFNELEP (79 aa)). Residues aspartate 341, aspartate 347, aspartate 350, and aspartate 351 each contribute to the Mg(2+) site.

Belongs to the phenylalanyl-tRNA synthetase beta subunit family. Type 2 subfamily. In terms of assembly, tetramer of two alpha and two beta subunits. Mg(2+) serves as cofactor.

The protein localises to the cytoplasm. The catalysed reaction is tRNA(Phe) + L-phenylalanine + ATP = L-phenylalanyl-tRNA(Phe) + AMP + diphosphate + H(+). The sequence is that of Phenylalanine--tRNA ligase beta subunit from Natronomonas pharaonis (strain ATCC 35678 / DSM 2160 / CIP 103997 / JCM 8858 / NBRC 14720 / NCIMB 2260 / Gabara) (Halobacterium pharaonis).